The following is a 521-amino-acid chain: Bifunctional purine biosynthesis protein PurH (521 aa).

Residues Met1–Val145 enclose the MGS-like domain.

This sequence belongs to the PurH family.

It carries out the reaction (6R)-10-formyltetrahydrofolate + 5-amino-1-(5-phospho-beta-D-ribosyl)imidazole-4-carboxamide = 5-formamido-1-(5-phospho-D-ribosyl)imidazole-4-carboxamide + (6S)-5,6,7,8-tetrahydrofolate. The enzyme catalyses IMP + H2O = 5-formamido-1-(5-phospho-D-ribosyl)imidazole-4-carboxamide. The protein operates within purine metabolism; IMP biosynthesis via de novo pathway; 5-formamido-1-(5-phospho-D-ribosyl)imidazole-4-carboxamide from 5-amino-1-(5-phospho-D-ribosyl)imidazole-4-carboxamide (10-formyl THF route): step 1/1. It functions in the pathway purine metabolism; IMP biosynthesis via de novo pathway; IMP from 5-formamido-1-(5-phospho-D-ribosyl)imidazole-4-carboxamide: step 1/1. This Paraburkholderia phymatum (strain DSM 17167 / CIP 108236 / LMG 21445 / STM815) (Burkholderia phymatum) protein is Bifunctional purine biosynthesis protein PurH.